The sequence spans 130 residues: Small ribosomal subunit protein uS8 (130 aa).

This sequence belongs to the universal ribosomal protein uS8 family. As to quaternary structure, part of the 30S ribosomal subunit.

Its function is as follows. One of the primary rRNA binding proteins, it binds directly to 16S rRNA central domain where it helps coordinate assembly of the platform of the 30S subunit. This Methanococcus vannielii (strain ATCC 35089 / DSM 1224 / JCM 13029 / OCM 148 / SB) protein is Small ribosomal subunit protein uS8.